The sequence spans 451 residues: Protein FAM117A (451 aa).

A compositionally biased stretch (gly residues) spans 1–25; it reads MSGAAAGGRGGGSWGPGRGGAGGLR. 2 disordered regions span residues 1 to 83 and 164 to 183; these read MSGA…RPQP and RTKL…VQGD. 2 positions are modified to phosphoserine: Ser29 and Ser67. Residues 149–175 adopt a coiled-coil conformation; sequence TDHRKEITKLKQQLQRTKLSRSGKEKE. A phosphoserine mark is found at Ser193 and Ser213. Positions 242-293 are disordered; that stretch reads DGHRAPAPPQNSSCDHSLLLEPGNLTSSPSVPLASPQPPSQASREEHQGATE. Phosphoserine is present on residues Ser318 and Ser326. Residue Thr353 is modified to Phosphothreonine. The disordered stretch occupies residues 403 to 451; that stretch reads SPGSPLPTASPRAPRKGPEASKASSLPSEPWQRSPPSEESVLFQSSLVV. Residues Ser412 and Ser426 each carry the phosphoserine modification. Polar residues predominate over residues 436–451; it reads SPPSEESVLFQSSLVV.

The protein belongs to the FAM117 family.

The chain is Protein FAM117A (Fam117a) from Mus musculus (Mouse).